The primary structure comprises 141 residues: Large ribosomal subunit protein uL11 (141 aa).

Belongs to the universal ribosomal protein uL11 family. In terms of assembly, part of the ribosomal stalk of the 50S ribosomal subunit. Interacts with L10 and the large rRNA to form the base of the stalk. L10 forms an elongated spine to which L12 dimers bind in a sequential fashion forming a multimeric L10(L12)X complex. Post-translationally, one or more lysine residues are methylated.

Its function is as follows. Forms part of the ribosomal stalk which helps the ribosome interact with GTP-bound translation factors. The polypeptide is Large ribosomal subunit protein uL11 (Aliarcobacter butzleri (strain RM4018) (Arcobacter butzleri)).